Here is a 223-residue protein sequence, read N- to C-terminus: Alpha-S2-casein (223 aa).

The N-terminal stretch at 1–15 (MKFFIFTCLLAVALA) is a signal peptide. Ser23, Ser24, Ser25, Ser72, Ser73, Ser74, Ser77, Ser145, Ser147, Ser151, and Ser159 each carry phosphoserine. The segment at residues 77–141 (SAEVAPEEIK…AGPFTPTVNR (65 aa)) is a repeat. Positions 159 to 223 (STEVFTKKTK…TNAIPYVRYL (65 aa)) form a repeat.

Belongs to the alpha-casein family. In terms of tissue distribution, mammary gland specific. Secreted in milk.

Its subcellular location is the secreted. Important role in the capacity of milk to transport calcium phosphate. This is Alpha-S2-casein (CSN1S2) from Capra hircus (Goat).